A 331-amino-acid polypeptide reads, in one-letter code: Nodulation protein D 2 (331 aa).

The region spanning 6 to 63 (LDLNLLVALDALMTERSLTAAARKINLSQPAMSAAVARLRSYFRDELFAMRGRKLVPT) is the HTH lysR-type domain. The H-T-H motif DNA-binding region spans 23–42 (LTAAARKINLSQPAMSAAVA).

Belongs to the LysR transcriptional regulatory family.

Functionally, nodD regulates the expression of the nodABCFE genes which encode other nodulation proteins. NodD is also a negative regulator of its own expression. Binds flavonoids as inducers. The chain is Nodulation protein D 2 (nodD2) from Bradyrhizobium elkanii.